Reading from the N-terminus, the 123-residue chain is Large ribosomal subunit protein bL12 (123 aa).

The protein belongs to the bacterial ribosomal protein bL12 family. As to quaternary structure, homodimer. Part of the ribosomal stalk of the 50S ribosomal subunit. Forms a multimeric L10(L12)X complex, where L10 forms an elongated spine to which 2 to 4 L12 dimers bind in a sequential fashion. Binds GTP-bound translation factors.

In terms of biological role, forms part of the ribosomal stalk which helps the ribosome interact with GTP-bound translation factors. Is thus essential for accurate translation. The chain is Large ribosomal subunit protein bL12 from Zymomonas mobilis subsp. mobilis (strain ATCC 31821 / ZM4 / CP4).